Consider the following 209-residue polypeptide: Streptogramin A acetyltransferase (209 aa).

Histidine 82 is an active-site residue.

Belongs to the transferase hexapeptide repeat family. As to quaternary structure, homohexamer.

Inactivates the A compounds of streptogramin antibiotics by acetylation, thus providing resistance to these antibiotics. The protein is Streptogramin A acetyltransferase (vatD) of Enterococcus faecium (Streptococcus faecium).